We begin with the raw amino-acid sequence, 117 residues long: Large ribosomal subunit protein bL19 (117 aa).

The protein belongs to the bacterial ribosomal protein bL19 family.

In terms of biological role, this protein is located at the 30S-50S ribosomal subunit interface and may play a role in the structure and function of the aminoacyl-tRNA binding site. This Mycoplasmopsis pulmonis (strain UAB CTIP) (Mycoplasma pulmonis) protein is Large ribosomal subunit protein bL19.